The sequence spans 409 residues: Major capsid protein (409 aa).

It belongs to the lambda phage major capsid protein family. In terms of assembly, homomultimer. Interacts with the portal protein. Interacts with the decoration protein.

It is found in the virion. It localises to the host cytoplasm. In terms of biological role, assembles to form an icosahedric capsid shell with a T=7 symmetry although with a diameter of about 82 nm, which is a larger volume than the usual T=7 capsids. A dramatic reconfiguration of the capsid shell that expands the procaspid from a diameter of 66 nm to a supersized capsid of 82 nm, allows packaging of the large viral DNA genome. The capsid decoration protein binds the expanded capsid and stabilizes it. This Thermus virus P23-45 (Thermus thermophilus phage P23-45) protein is Major capsid protein.